We begin with the raw amino-acid sequence, 197 residues long: Holliday junction branch migration complex subunit RuvA (197 aa).

The segment at M1 to R63 is domain I. The domain II stretch occupies residues S64–V142. Positions A143–S147 are flexible linker. The interval A148–K197 is domain III.

It belongs to the RuvA family. In terms of assembly, homotetramer. Forms an RuvA(8)-RuvB(12)-Holliday junction (HJ) complex. HJ DNA is sandwiched between 2 RuvA tetramers; dsDNA enters through RuvA and exits via RuvB. An RuvB hexamer assembles on each DNA strand where it exits the tetramer. Each RuvB hexamer is contacted by two RuvA subunits (via domain III) on 2 adjacent RuvB subunits; this complex drives branch migration. In the full resolvosome a probable DNA-RuvA(4)-RuvB(12)-RuvC(2) complex forms which resolves the HJ.

The protein localises to the cytoplasm. Functionally, the RuvA-RuvB-RuvC complex processes Holliday junction (HJ) DNA during genetic recombination and DNA repair, while the RuvA-RuvB complex plays an important role in the rescue of blocked DNA replication forks via replication fork reversal (RFR). RuvA specifically binds to HJ cruciform DNA, conferring on it an open structure. The RuvB hexamer acts as an ATP-dependent pump, pulling dsDNA into and through the RuvAB complex. HJ branch migration allows RuvC to scan DNA until it finds its consensus sequence, where it cleaves and resolves the cruciform DNA. The protein is Holliday junction branch migration complex subunit RuvA of Streptococcus pneumoniae serotype 19F (strain G54).